Reading from the N-terminus, the 130-residue chain is Small ribosomal subunit protein uS9 (130 aa).

Belongs to the universal ribosomal protein uS9 family.

The polypeptide is Small ribosomal subunit protein uS9 (Teredinibacter turnerae (strain ATCC 39867 / T7901)).